The sequence spans 338 residues: Lipoyl synthase (338 aa).

A disordered region spans residues 1–24 (MTTVQEAVPNLIPTQDATPRPAPK). Cys84, Cys89, Cys95, Cys110, Cys114, Cys117, and Ser324 together coordinate [4Fe-4S] cluster. The Radical SAM core domain occupies 96–313 (FSGGTATFMI…AEEGYKMGFK (218 aa)).

Belongs to the radical SAM superfamily. Lipoyl synthase family. [4Fe-4S] cluster serves as cofactor.

The protein resides in the cytoplasm. The enzyme catalyses [[Fe-S] cluster scaffold protein carrying a second [4Fe-4S](2+) cluster] + N(6)-octanoyl-L-lysyl-[protein] + 2 oxidized [2Fe-2S]-[ferredoxin] + 2 S-adenosyl-L-methionine + 4 H(+) = [[Fe-S] cluster scaffold protein] + N(6)-[(R)-dihydrolipoyl]-L-lysyl-[protein] + 4 Fe(3+) + 2 hydrogen sulfide + 2 5'-deoxyadenosine + 2 L-methionine + 2 reduced [2Fe-2S]-[ferredoxin]. The protein operates within protein modification; protein lipoylation via endogenous pathway; protein N(6)-(lipoyl)lysine from octanoyl-[acyl-carrier-protein]: step 2/2. Its function is as follows. Catalyzes the radical-mediated insertion of two sulfur atoms into the C-6 and C-8 positions of the octanoyl moiety bound to the lipoyl domains of lipoate-dependent enzymes, thereby converting the octanoylated domains into lipoylated derivatives. The protein is Lipoyl synthase of Pseudomonas putida (strain W619).